A 210-amino-acid chain; its full sequence is MSSAKELKKSVLAPVLDNNPIALQVLGVCSALAVTTKLETAFVMTLAVMFVTALSNFFVSLIRNHIPNSVRIIVQMAIIASLVIVVDQILKAYLYDISKQLSVFVGLIITNCIVMGRAEAFAMKSEPIPSFIDGIGNGLGYGFVLMTVGFFRELLGSGKLFGLEVLPLISNGGWYQPNGLMLLAPSAFFLIGFMIWAIRTFKPEQVEAKE.

Transmembrane regions (helical) follow at residues 42 to 62 (FVMT…VSLI), 72 to 92 (IIVQ…ILKA), 103 to 123 (VFVG…AFAM), 131 to 151 (FIDG…VGFF), and 178 to 198 (NGLM…IWAI).

It belongs to the NqrDE/RnfAE family. In terms of assembly, composed of six subunits; NqrA, NqrB, NqrC, NqrD, NqrE and NqrF.

Its subcellular location is the cell inner membrane. It catalyses the reaction a ubiquinone + n Na(+)(in) + NADH + H(+) = a ubiquinol + n Na(+)(out) + NAD(+). NQR complex catalyzes the reduction of ubiquinone-1 to ubiquinol by two successive reactions, coupled with the transport of Na(+) ions from the cytoplasm to the periplasm. NqrA to NqrE are probably involved in the second step, the conversion of ubisemiquinone to ubiquinol. In Vibrio cholerae serotype O1 (strain M66-2), this protein is Na(+)-translocating NADH-quinone reductase subunit D.